A 235-amino-acid chain; its full sequence is Octanoyltransferase (235 aa).

One can recognise a BPL/LPL catalytic domain in the interval 30-214 (NELEDTLLLL…YFGKVFGAKF (185 aa)). Substrate-binding positions include 75–82 (RGGDVTYH), 144–146 (AIG), and 157–159 (GFA). C175 functions as the Acyl-thioester intermediate in the catalytic mechanism.

Belongs to the LipB family.

It is found in the cytoplasm. It carries out the reaction octanoyl-[ACP] + L-lysyl-[protein] = N(6)-octanoyl-L-lysyl-[protein] + holo-[ACP] + H(+). It functions in the pathway protein modification; protein lipoylation via endogenous pathway; protein N(6)-(lipoyl)lysine from octanoyl-[acyl-carrier-protein]: step 1/2. In terms of biological role, catalyzes the transfer of endogenously produced octanoic acid from octanoyl-acyl-carrier-protein onto the lipoyl domains of lipoate-dependent enzymes. Lipoyl-ACP can also act as a substrate although octanoyl-ACP is likely to be the physiological substrate. This chain is Octanoyltransferase, found in Caldicellulosiruptor saccharolyticus (strain ATCC 43494 / DSM 8903 / Tp8T 6331).